Consider the following 301-residue polypeptide: 2-methoxy-6-polyprenyl-1,4-benzoquinol methylase, mitochondrial (301 aa).

The N-terminal 16 residues, 1 to 16 (MQTTRSTRLLSLARRF), are a transit peptide targeting the mitochondrion. The span at 20 to 31 (RTASQSAQNSKG) shows a compositional bias: polar residues. The disordered stretch occupies residues 20 to 44 (RTASQSAQNSKGMASGAESISGKEK). S-adenosyl-L-methionine-binding positions include Thr111, Asp139, and 173–174 (DA).

The protein belongs to the class I-like SAM-binding methyltransferase superfamily. MenG/UbiE family. In terms of assembly, component of a multi-subunit COQ enzyme complex.

Its subcellular location is the mitochondrion inner membrane. It carries out the reaction a 2-methoxy-6-(all-trans-polyprenyl)benzene-1,4-diol + S-adenosyl-L-methionine = a 5-methoxy-2-methyl-3-(all-trans-polyprenyl)benzene-1,4-diol + S-adenosyl-L-homocysteine + H(+). It participates in cofactor biosynthesis; ubiquinone biosynthesis. Methyltransferase required for the conversion of 2-polyprenyl-6-methoxy-1,4-benzoquinol (DDMQH2) to 2-polyprenyl-3-methyl-6-methoxy-1,4-benzoquinol (DMQH2). This chain is 2-methoxy-6-polyprenyl-1,4-benzoquinol methylase, mitochondrial, found in Drosophila melanogaster (Fruit fly).